The following is a 201-amino-acid chain: Prostamide/prostaglandin F synthase (201 aa).

This sequence belongs to the peroxiredoxin-like PRXL2 family. Prostamide/prostaglandin F synthase subfamily.

It is found in the cytoplasm. It localises to the cytosol. It carries out the reaction prostaglandin H2 + [thioredoxin]-dithiol = prostaglandin F2alpha + [thioredoxin]-disulfide. The enzyme catalyses prostamide F2alpha + [thioredoxin]-disulfide = prostamide H2 + [thioredoxin]-dithiol. Catalyzes the reduction of prostaglandin-ethanolamide H(2) (prostamide H(2)) to prostamide F(2alpha) with NADPH as proton donor. Also able to reduce prostaglandin H(2) to prostaglandin F(2alpha). The sequence is that of Prostamide/prostaglandin F synthase (prxl2b) from Xenopus tropicalis (Western clawed frog).